The chain runs to 317 residues: Probable arabinan endo-1,5-alpha-L-arabinosidase C (317 aa).

The N-terminal stretch at 1 to 17 (MLSFLAALSLPLALVNA) is a signal peptide. The active-site Proton acceptor is Asp-32. An N-linked (GlcNAc...) asparagine glycan is attached at Asn-190. Residue Glu-198 is the Proton donor of the active site.

Belongs to the glycosyl hydrolase 43 family.

The protein resides in the secreted. It catalyses the reaction Endohydrolysis of (1-&gt;5)-alpha-arabinofuranosidic linkages in (1-&gt;5)-arabinans.. It functions in the pathway glycan metabolism; L-arabinan degradation. Functionally, endo-1,5-alpha-L-arabinanase involved in degradation of pectin. Its preferred substrate is linear 1,5-alpha-L-arabinan. This is Probable arabinan endo-1,5-alpha-L-arabinosidase C (abnC) from Aspergillus flavus (strain ATCC 200026 / FGSC A1120 / IAM 13836 / NRRL 3357 / JCM 12722 / SRRC 167).